The chain runs to 261 residues: Na(+)-translocating NADH-quinone reductase subunit C (261 aa).

The chain crosses the membrane as a helical span at residues 11-31 (LLVALVVCLVSSVFVAGAAVA). Thr-230 is modified (FMN phosphoryl threonine).

Belongs to the NqrC family. As to quaternary structure, composed of six subunits; NqrA, NqrB, NqrC, NqrD, NqrE and NqrF. FMN serves as cofactor.

The protein localises to the cell inner membrane. It catalyses the reaction a ubiquinone + n Na(+)(in) + NADH + H(+) = a ubiquinol + n Na(+)(out) + NAD(+). NQR complex catalyzes the reduction of ubiquinone-1 to ubiquinol by two successive reactions, coupled with the transport of Na(+) ions from the cytoplasm to the periplasm. NqrA to NqrE are probably involved in the second step, the conversion of ubisemiquinone to ubiquinol. The chain is Na(+)-translocating NADH-quinone reductase subunit C from Pseudomonas aeruginosa (strain ATCC 15692 / DSM 22644 / CIP 104116 / JCM 14847 / LMG 12228 / 1C / PRS 101 / PAO1).